Consider the following 805-residue polypeptide: Sucrose synthase (805 aa).

Positions 275 to 752 (MVFNVVILSP…GLQRIEEKYT (478 aa)) are GT-B glycosyltransferase.

Belongs to the glycosyltransferase 1 family. Plant sucrose synthase subfamily.

It catalyses the reaction an NDP-alpha-D-glucose + D-fructose = a ribonucleoside 5'-diphosphate + sucrose + H(+). In terms of biological role, sucrose-cleaving enzyme that provides UDP-glucose and fructose for various metabolic pathways. The sequence is that of Sucrose synthase (SS1) from Vigna radiata var. radiata (Mung bean).